Reading from the N-terminus, the 917-residue chain is Hexokinase HKDC1 (917 aa).

Residues 1 to 20 (MFAVHLMAFYFSKLKEDQIK) are mitochondrial-binding peptide (MBP). 2 consecutive Hexokinase domains span residues 16 to 458 (EDQI…MVTA) and 464 to 905 (QAQR…LITA). Residues arginine 30 and 84-89 (DLGGSK) each bind ATP. The interval 73-207 (DGSENGEFLS…DMDVDILALV (135 aa)) is hexokinase small subdomain 1. Position 84 to 91 (84 to 91 (DLGGSKFR)) interacts with D-glucose 6-phosphate. D-glucose contacts are provided by residues serine 155, 172-173 (TK), and 208-209 (ND). The tract at residues 208–447 (NDTVGTMMTC…CDVRFLLSES (240 aa)) is hexokinase large subdomain 1. Positions 209 and 232 each coordinate D-glucose 6-phosphate. Residues asparagine 235, glutamate 260, and 291–294 (QLFE) each bind D-glucose. 413 to 415 (DGT) is a D-glucose 6-phosphate binding site. Residue 425 to 426 (KR) participates in ATP binding. Residues serine 449 and 532-536 (DLGGT) contribute to the D-glucose 6-phosphate site. The interval 521–654 (DGTEKGKFLA…EFDLDIVAVV (134 aa)) is hexokinase small subdomain 2. 532 to 537 (DLGGTN) lines the ATP pocket. D-glucose-binding positions include 602–603 (SF), 619–620 (TK), and 655–656 (ND). The hexokinase large subdomain 2 stretch occupies residues 655 to 894 (NDTVGTMMTC…CDVTFMLSED (240 aa)). D-glucose 6-phosphate-binding residues include aspartate 656 and threonine 679. Threonine 679 serves as a coordination point for ATP. Residues 681-682 (SN), glutamate 707, and glutamate 741 each bind D-glucose. ATP contacts are provided by residues 746–747 (GM), 783–787 (TKFLS), and 862–866 (TLYKL). D-glucose 6-phosphate contacts are provided by residues 860 to 862 (DGT) and serine 896.

Belongs to the hexokinase family. As to expression, widely expressed. Highly expressed in the brush border, surface epithelium and the myenteric plexus of the small and large intestines; the acinar centrocytes and interlobular ducts of the pancreas; and the alveolar macrophages in the lungs (at protein level). Present at moderate level in the thyroid follicular epithelium (at protein level).

It localises to the cytoplasm. The protein resides in the mitochondrion membrane. Its subcellular location is the photoreceptor inner segment. It catalyses the reaction a D-hexose + ATP = a D-hexose 6-phosphate + ADP + H(+). It carries out the reaction D-glucose + ATP = D-glucose 6-phosphate + ADP + H(+). The protein operates within carbohydrate metabolism; hexose metabolism. Its pathway is carbohydrate degradation; glycolysis; D-glyceraldehyde 3-phosphate and glycerone phosphate from D-glucose: step 1/4. Its function is as follows. Catalyzes the phosphorylation of hexose to hexose 6-phosphate, although at very low level compared to other hexokinases. Has low glucose phosphorylating activity compared to other hexokinases. Involved in glucose homeostasis and hepatic lipid accumulation. Required to maintain whole-body glucose homeostasis during pregnancy; however additional evidences are required to confirm this role. This is Hexokinase HKDC1 from Homo sapiens (Human).